Reading from the N-terminus, the 394-residue chain is Flavohemoprotein (394 aa).

In terms of domain architecture, Globin spans 1-138 (MLTQEHINII…LAQVFIDREG (138 aa)). His-85 is a heme b binding site. Catalysis depends on charge relay system residues Tyr-95 and Glu-137. Positions 149 to 394 (GGWRDGRTFV…VFGPHAQLAA (246 aa)) are reductase. The FAD-binding FR-type domain occupies 152–262 (RDGRTFVVRE…YAPAGDFFYV (111 aa)). Residues Tyr-190 and 206–209 (RQYS) contribute to the FAD site. An NADP(+)-binding site is contributed by 274-279 (GVGATP). Position 385 to 388 (385 to 388 (VFGP)) interacts with FAD.

Belongs to the globin family. Two-domain flavohemoproteins subfamily. The protein in the C-terminal section; belongs to the flavoprotein pyridine nucleotide cytochrome reductase family. The cofactor is heme b. Requires FAD as cofactor.

It catalyses the reaction 2 nitric oxide + NADPH + 2 O2 = 2 nitrate + NADP(+) + H(+). It carries out the reaction 2 nitric oxide + NADH + 2 O2 = 2 nitrate + NAD(+) + H(+). Functionally, is involved in NO detoxification in an aerobic process, termed nitric oxide dioxygenase (NOD) reaction that utilizes O(2) and NAD(P)H to convert NO to nitrate, which protects the bacterium from various noxious nitrogen compounds. Therefore, plays a central role in the inducible response to nitrosative stress. The polypeptide is Flavohemoprotein (hmp) (Vibrio cholerae serotype O1 (strain ATCC 39315 / El Tor Inaba N16961)).